Reading from the N-terminus, the 362-residue chain is Aminomethyltransferase (362 aa).

Belongs to the GcvT family. As to quaternary structure, the glycine cleavage system is composed of four proteins: P, T, L and H.

It carries out the reaction N(6)-[(R)-S(8)-aminomethyldihydrolipoyl]-L-lysyl-[protein] + (6S)-5,6,7,8-tetrahydrofolate = N(6)-[(R)-dihydrolipoyl]-L-lysyl-[protein] + (6R)-5,10-methylene-5,6,7,8-tetrahydrofolate + NH4(+). The glycine cleavage system catalyzes the degradation of glycine. This Bacillus subtilis (strain 168) protein is Aminomethyltransferase.